Reading from the N-terminus, the 103-residue chain is Small ribosomal subunit protein eS25 (103 aa).

A disordered region spans residues 1–23 (MGGEDMAKKKAPSAKEGEKQQGF).

The protein belongs to the eukaryotic ribosomal protein eS25 family.

This Aeropyrum pernix (strain ATCC 700893 / DSM 11879 / JCM 9820 / NBRC 100138 / K1) protein is Small ribosomal subunit protein eS25 (rps25e).